The sequence spans 1164 residues: WASH complex subunit 5 (1164 aa).

The protein belongs to the strumpellin family. In terms of assembly, probable component of the WASH complex.

This is WASH complex subunit 5 from Dictyostelium discoideum (Social amoeba).